Here is a 115-residue protein sequence, read N- to C-terminus: Hydrogenase maturation factor HypA (115 aa).

Residue histidine 2 coordinates Ni(2+). Zn(2+)-binding residues include cysteine 73, cysteine 76, cysteine 89, and cysteine 92.

The protein belongs to the HypA/HybF family.

In terms of biological role, involved in the maturation of [NiFe] hydrogenases. Required for nickel insertion into the metal center of the hydrogenase. This is Hydrogenase maturation factor HypA from Shewanella halifaxensis (strain HAW-EB4).